A 42-amino-acid polypeptide reads, in one-letter code: uncharacterized protein (42 aa).

This is an uncharacterized protein from Musa (BBTV).